The primary structure comprises 283 residues: Pantothenate synthetase (283 aa).

30 to 37 (MGALHEGH) provides a ligand contact to ATP. His-37 functions as the Proton donor in the catalytic mechanism. Gln-61 is a (R)-pantoate binding site. Gln-61 lines the beta-alanine pocket. 147-150 (GMKD) serves as a coordination point for ATP. Residue Gln-153 participates in (R)-pantoate binding. ATP contacts are provided by residues Val-176 and 184 to 187 (LSSR).

The protein belongs to the pantothenate synthetase family. As to quaternary structure, homodimer.

Its subcellular location is the cytoplasm. It catalyses the reaction (R)-pantoate + beta-alanine + ATP = (R)-pantothenate + AMP + diphosphate + H(+). Its pathway is cofactor biosynthesis; (R)-pantothenate biosynthesis; (R)-pantothenate from (R)-pantoate and beta-alanine: step 1/1. Functionally, catalyzes the condensation of pantoate with beta-alanine in an ATP-dependent reaction via a pantoyl-adenylate intermediate. This Endomicrobium trichonymphae protein is Pantothenate synthetase.